Reading from the N-terminus, the 437-residue chain is MESLLTDKQRSDLETSIFGYVSRLTNDEALLSQLAAVLSQPSGSEPVPADTLKANALLLEKKWLSVIRLQRKVMDLETRLEAAEREASSTHKANGLGAGDPKTWLPKTSRFSLLHKQPVNAVSFHPFHSTLASACEDGNIRIWDYELGEIETTIKAHTRGVLDVDFSQPDTGASRDKSHDKPRADVSHAQPRALLVSCSSDLTIRIWDPQNEYANVKTLTGHDHTISAVKFTASGNHVISASRDKTVRVWSVQSGYCVRTVHGHTDWVKSCAALNEEFIFSAGIDHVTRVSEFVSGDGKMTLLGHEHVIEGVAVYPKSAAGCLAKLDKTSSYFVVSWSRDKTIRVWSSRGDPLLILRGHDNWVRGVVLHPAGRYLVSVSDDKTMRCWDLEQGGRCIRVVDAHGHFVTCVAWAPNDVNGRVRCLVATGGVDGQVKVWQ.

Residues 64–94 adopt a coiled-coil conformation; the sequence is LSVIRLQRKVMDLETRLEAAEREASSTHKAN. WD repeat units lie at residues 114-153, 156-217, 221-260, 263-301, 304-356, 358-397, and 401-437; these read LHKQ…IETT, AHTR…ANVK, GHDH…CVRT, GHTD…GKMT, GHEH…LLIL, GHDN…RCIR, and AHGH…KVWQ. A disordered region spans residues 165-186; the sequence is DFSQPDTGASRDKSHDKPRADV. Over residues 173–186 the composition is skewed to basic and acidic residues; sequence ASRDKSHDKPRADV.

Belongs to the WD repeat LIS1/nudF family. Self-associates. Interacts with NDL1 and dynein.

Its subcellular location is the cytoplasm. The protein localises to the cytoskeleton. It is found in the spindle pole. Positively regulates the activity of the minus-end directed microtubule motor protein dynein. Plays a central role in positioning the mitotic spindle at the bud neck during cell division. Targets cytoplasmic dynein to microtubule plus ends, thereby promoting dynein-mediated microtubule sliding along the bud cortex and consequently the movement of the mitotic spindle to the bud neck. The protein is Nuclear distribution protein PAC1 of Yarrowia lipolytica (strain CLIB 122 / E 150) (Yeast).